A 262-amino-acid chain; its full sequence is Ornithine carbamoyltransferase (262 aa).

Carbamoyl phosphate-binding positions include Ser3–Arg7, Gln30, Arg54, and His81–Gln84. L-ornithine contacts are provided by residues Asn114, Asp178, and Ser182 to Met183. Carbamoyl phosphate is bound by residues His219–Pro222 and Thr247.

It belongs to the aspartate/ornithine carbamoyltransferase superfamily. OTCase family.

The protein localises to the cytoplasm. The enzyme catalyses carbamoyl phosphate + L-ornithine = L-citrulline + phosphate + H(+). The protein operates within amino-acid biosynthesis; L-arginine biosynthesis; L-arginine from L-ornithine and carbamoyl phosphate: step 1/3. Its function is as follows. Reversibly catalyzes the transfer of the carbamoyl group from carbamoyl phosphate (CP) to the N(epsilon) atom of ornithine (ORN) to produce L-citrulline. This Neisseria mucosa protein is Ornithine carbamoyltransferase (argF).